Here is a 774-residue protein sequence, read N- to C-terminus: Vezatin (774 aa).

2 helical membrane-spanning segments follow: residues 138 to 158 and 163 to 183; these read IATPNIWETSILFVFLSAVAA and SISSSLIWGPSLILFAAFTVL. A coiled-coil region spans residues 430-457; the sequence is VRSLQLHLKALLNEVIVLEDELDKLSSC. Residues 746–757 are compositionally biased toward acidic residues; sequence FGDEWDDDDDNE. The interval 746–774 is disordered; sequence FGDEWDDDDDNEDHDHDKERNNDSSQLEG. Residues 758-767 are compositionally biased toward basic and acidic residues; sequence DHDHDKERNN.

This sequence belongs to the vezatin family. In terms of assembly, interacts with myosin VIIa and the cadherin-catenins complex.

It is found in the cell membrane. The protein localises to the cell junction. It localises to the adherens junction. The protein resides in the nucleus. Functionally, plays a pivotal role in the establishment of adherens junctions and their maintenance in adult life. This chain is Vezatin (vezt), found in Xenopus laevis (African clawed frog).